The chain runs to 320 residues: ATP-dependent 6-phosphofructokinase (320 aa).

Residue glycine 11 participates in ATP binding. An ADP-binding site is contributed by 21 to 25 (RAIAR). ATP contacts are provided by residues 72–73 (RF) and 102–105 (GDGS). Aspartate 103 provides a ligand contact to Mg(2+). Residues 125-127 (TID), arginine 162, and 169-171 (MGR) each bind substrate. Aspartate 127 functions as the Proton acceptor in the catalytic mechanism. Residues 185–187 (GAD) and 213–215 (KDH) contribute to the ADP site. Substrate contacts are provided by residues glutamate 222, arginine 243, and 249–252 (HIQR).

The protein belongs to the phosphofructokinase type A (PFKA) family. ATP-dependent PFK group I subfamily. Prokaryotic clade 'B1' sub-subfamily. As to quaternary structure, homotetramer. Mg(2+) is required as a cofactor.

The protein resides in the cytoplasm. The enzyme catalyses beta-D-fructose 6-phosphate + ATP = beta-D-fructose 1,6-bisphosphate + ADP + H(+). Its pathway is carbohydrate degradation; glycolysis; D-glyceraldehyde 3-phosphate and glycerone phosphate from D-glucose: step 3/4. Allosterically activated by ADP and other diphosphonucleosides, and allosterically inhibited by phosphoenolpyruvate. Catalyzes the phosphorylation of D-fructose 6-phosphate to fructose 1,6-bisphosphate by ATP, the first committing step of glycolysis. In Ligilactobacillus salivarius (strain UCC118) (Lactobacillus salivarius), this protein is ATP-dependent 6-phosphofructokinase.